A 323-amino-acid chain; its full sequence is o-succinylbenzoate synthase (323 aa).

Catalysis depends on lysine 134, which acts as the Proton donor. Residues aspartate 162, glutamate 191, and aspartate 214 each coordinate Mg(2+). The Proton acceptor role is filled by lysine 236.

Belongs to the mandelate racemase/muconate lactonizing enzyme family. MenC type 1 subfamily. Requires a divalent metal cation as cofactor.

It carries out the reaction (1R,6R)-6-hydroxy-2-succinyl-cyclohexa-2,4-diene-1-carboxylate = 2-succinylbenzoate + H2O. Its pathway is quinol/quinone metabolism; 1,4-dihydroxy-2-naphthoate biosynthesis; 1,4-dihydroxy-2-naphthoate from chorismate: step 4/7. It participates in quinol/quinone metabolism; menaquinone biosynthesis. Converts 2-succinyl-6-hydroxy-2,4-cyclohexadiene-1-carboxylate (SHCHC) to 2-succinylbenzoate (OSB). The chain is o-succinylbenzoate synthase from Proteus mirabilis (strain HI4320).